The primary structure comprises 360 residues: MALSRVCWARAALWGSAVPPGLYVVRRLQFVRSGLTWGAPRSSKLHLSPKADVKSLISYVVTKTKVINGKYHRFLGRHFPRFYVPYTIFMKGLQMLWADGKKARRIKTNMWKHNIKFHQLPYREMEHLRQFRRDVTKCLFLGILSIPPFANYLVFLLMYLFPRQLLIRHFWTPKQQIDFLDIYHALRKQSHPEILCYLEKVVPLISDAGLQWHMTELCTKMQRGTHPAVHDILALRECFANHPLGMDQLRALQMKALCRAMLLTPYLPSVLLRHRLKTHTTVIHQLDKALAKLGVGQLTAQEVKSACYLRGLNSTHIAEERCRTWLGEWLQISCSLKETELSLLLHNVVLLSINYVGSRR.

Residues 1 to 110 are required and sufficient for mitochondrial import; that stretch reads MALSRVCWAR…KKARRIKTNM (110 aa). Topologically, residues 1–137 are cytoplasmic; it reads MALSRVCWAR…LRQFRRDVTK (137 aa). The chain crosses the membrane as a helical span at residues 138–158; that stretch reads CLFLGILSIPPFANYLVFLLM. Over 159–360 the chain is Mitochondrial intermembrane; sequence YLFPRQLLIR…LSINYVGSRR (202 aa). The Letm1 RBD domain occupies 186-360; the sequence is LRKQSHPEIL…LSINYVGSRR (175 aa).

In terms of assembly, interacts with BRI3BP. Interacts (via C-terminal) with SMARCA4; the interaction regulates transcriptional expression of thermogenic genes in brown adipose tissue.

It is found in the mitochondrion outer membrane. The protein localises to the nucleus. Its subcellular location is the mitochondrion inner membrane. In terms of biological role, plays an essential role for mitochondrial structure and function, as well as thermogenesis of brown adipocytes. In brown adipose tissue also localizes in the nucleus where it interacts with the chromatin remodeler SMARCA4 to regulate thermogenic genes expression, such as UCP1. May regulate phagocytosis and inflammatory responses to lipopolysaccharide in macrophages. Involved in tumorigenesis and may function as a negative regulator of the p53/TP53. This chain is LETM1 domain-containing protein 1, found in Bos taurus (Bovine).